The primary structure comprises 1235 residues: ATP-dependent helicase/nuclease subunit A (1235 aa).

The region spanning 12–482 (SLWTDDQWKA…IDLSQNFRSR (471 aa)) is the UvrD-like helicase ATP-binding domain. 33-40 (AAAGSGKT) serves as a coordination point for ATP. One can recognise a UvrD-like helicase C-terminal domain in the interval 509–800 (AAELTLGASF…RMMTIHASKG (292 aa)).

This sequence belongs to the helicase family. AddA subfamily. Heterodimer of AddA and AddB/RexB. Mg(2+) is required as a cofactor.

The catalysed reaction is Couples ATP hydrolysis with the unwinding of duplex DNA by translocating in the 3'-5' direction.. It carries out the reaction ATP + H2O = ADP + phosphate + H(+). The heterodimer acts as both an ATP-dependent DNA helicase and an ATP-dependent, dual-direction single-stranded exonuclease. Recognizes the chi site generating a DNA molecule suitable for the initiation of homologous recombination. The AddA nuclease domain is required for chi fragment generation; this subunit has the helicase and 3' -&gt; 5' nuclease activities. The polypeptide is ATP-dependent helicase/nuclease subunit A (Listeria monocytogenes serotype 4b (strain F2365)).